The following is a 396-amino-acid chain: Cell adhesion molecule 3 (396 aa).

Residues 1 to 22 (MGAPSALPLLLLLACSWAPGGA) form the signal peptide. One can recognise an Ig-like V-type domain in the interval 23–124 (NLSQDDSQPW…VRTAKSLVTV (102 aa)). Residues 23 to 328 (NLSQDDSQPW…PVPSSSSTYH (306 aa)) lie on the Extracellular side of the membrane. Cystine bridges form between cysteine 48–cysteine 108, cysteine 150–cysteine 207, and cysteine 252–cysteine 297. Ig-like C2-type domains follow at residues 128 to 226 (PQKP…QRIE) and 231 to 313 (PTAM…FTLN). Asparagine 288 is a glycosylation site (N-linked (GlcNAc...) asparagine). A helical membrane pass occupies residues 329–349 (AIIGGIVAFIVFLLLILLIFL). At 350 to 396 (GHYLIRHKGTYLTHEAKGSDDAPDADTAIINAEGGQSGGDDKKEYFI) the chain is on the cytoplasmic side. The disordered stretch occupies residues 365-396 (AKGSDDAPDADTAIINAEGGQSGGDDKKEYFI). Position 386 is a phosphoserine (serine 386).

Belongs to the nectin family. Homodimer. Can form trans-heterodimers with NECTIN3. Interacts with EPB41L1, DLG3, PALS2 and CASK.

Its subcellular location is the cell membrane. It is found in the cell junction. Involved in cell-cell adhesion. Has both calcium-independent homophilic cell-cell adhesion activity and calcium-independent heterophilic cell-cell adhesion activity with IGSF4, NECTIN1 and NECTIN3. Interaction with EPB41L1 may regulate structure or function of cell-cell junctions. The chain is Cell adhesion molecule 3 (Cadm3) from Rattus norvegicus (Rat).